Reading from the N-terminus, the 86-residue chain is MPKSEIHPKWYPDAKVICNGEVVMTTGSTKPELHVDVWSGNHPFFTGTQKILDTEGRVDRFMKKYGMGSADSATSKETKESKKSDK.

Residues 65-86 (YGMGSADSATSKETKESKKSDK) form a disordered region. A compositionally biased stretch (basic and acidic residues) spans 74 to 86 (TSKETKESKKSDK).

The protein belongs to the bacterial ribosomal protein bL31 family. Type A subfamily. In terms of assembly, part of the 50S ribosomal subunit.

In terms of biological role, binds the 23S rRNA. In Prochlorococcus marinus subsp. pastoris (strain CCMP1986 / NIES-2087 / MED4), this protein is Large ribosomal subunit protein bL31.